A 309-amino-acid chain; its full sequence is Cyclin-dependent kinase B1-1 (309 aa).

In terms of domain architecture, Protein kinase spans 4 to 301; sequence YEKLEKVGEG…AKTALDHPYF (298 aa). Residues 10 to 18 and lysine 33 each bind ATP; that span reads VGEGTYGKV. Tyrosine 15 carries the post-translational modification Phosphotyrosine. Aspartate 142 (proton acceptor) is an active-site residue. Residue threonine 176 is modified to Phosphothreonine; by CAK.

This sequence belongs to the protein kinase superfamily. CMGC Ser/Thr protein kinase family. CDC2/CDKX subfamily. As to quaternary structure, interacts with CKS1. Interacts with CYCU3-1. Interacts with SIM, SMR1 and SMR2. As to expression, highly expressed in guard cells and stomatal precursor cells of cotyledons. Expressed in roots, stems, flowers and siliques.

It is found in the nucleus. It catalyses the reaction L-seryl-[protein] + ATP = O-phospho-L-seryl-[protein] + ADP + H(+). It carries out the reaction L-threonyl-[protein] + ATP = O-phospho-L-threonyl-[protein] + ADP + H(+). The enzyme catalyses [DNA-directed RNA polymerase] + ATP = phospho-[DNA-directed RNA polymerase] + ADP + H(+). Its activity is regulated as follows. Phosphorylation at Thr-14 or Tyr-15 inactivates the enzyme, while phosphorylation at Thr-176 activates it. In terms of biological role, may control G2/M (mitosis) phase progression. Plays a role in regulating seedling growth in darkness via regulation of hypocotyl cell elongation and cotyledon cell development. Plays a role in stomatal development. Required to suppress endoreduplication. Together with CDKB1-2, promotes both the last division in the stomatal cell lineage as well as the number of stomata. In collaboration with MYB124 and MYB88, restrict the G1/S transition and chloroplast and nuclear number during stomatal formation, and normally maintain fate and developmental progression throughout the stomatal cell lineage. This Arabidopsis thaliana (Mouse-ear cress) protein is Cyclin-dependent kinase B1-1 (CDKB1-1).